A 228-amino-acid chain; its full sequence is Ion-translocating oxidoreductase complex subunit G (228 aa).

The chain crosses the membrane as a helical span at residues 35–55 (ALSLGLVCALVAVALLLGNQL). Position 197 is an FMN phosphoryl threonine (Thr-197).

Belongs to the RnfG family. As to quaternary structure, the complex is composed of six subunits: RnfA, RnfB, RnfC, RnfD, RnfE and RnfG. It depends on FMN as a cofactor.

Its subcellular location is the cell inner membrane. Functionally, part of a membrane-bound complex that couples electron transfer with translocation of ions across the membrane. This is Ion-translocating oxidoreductase complex subunit G from Stutzerimonas stutzeri (Pseudomonas stutzeri).